A 346-amino-acid chain; its full sequence is O-methyltransferase atr3 (346 aa).

2 disordered regions span residues 1–22 (MTSVDTMPPPMVRLESQPDDLM) and 52–88 (GLKSHPVVTTGTEKTGVMPPLQPESKKNNKGVPWYHA). S-adenosyl-L-methionine-binding positions include 190-191 (DL) and 217-218 (DI).

The protein belongs to the class I-like SAM-binding methyltransferase superfamily. In terms of assembly, homodimer.

The enzyme catalyses 4-O-demethylbarbatate + S-adenosyl-L-methionine = proatranorin I + S-adenosyl-L-homocysteine. It participates in secondary metabolite biosynthesis; terpenoid biosynthesis. O-methyltransferase; part of the gene cluster that mediates the biosynthesis of atranorin, a depside of polyketide origin that accumulates in the cortical or medullary layers of lichen thalli. Atr3 methylates the carboxyl group of 4-O-demethylbarbatic acid to yield proatranorin I. Atr3 is also able to methylate the atr2 product proatranorin III to produce the final compound atranorin. The first step in the pathway is performed by the non-reducing polyketide synthase atr1 that produces 4-O-demethylbarbatic acid composed of two 3-methylorsellinic acid (3MOA) moieties. The pathway continues with the actions of the cytochrome P450 monooygenase atr2 that catalizes the oxidation of c-9 and the O-methyltransferase atr3 that performs the methylation of the carboxyl group to yield atranorin, via the proatranorin II and III intermediates if atr2 acts first, or the proatranorin I intermediate if atr3 acts first. The protein is O-methyltransferase atr3 of Stereocaulon alpinum (Alpine snow lichen).